The primary structure comprises 197 residues: Imidazoleglycerol-phosphate dehydratase (197 aa).

The protein belongs to the imidazoleglycerol-phosphate dehydratase family.

Its subcellular location is the cytoplasm. It carries out the reaction D-erythro-1-(imidazol-4-yl)glycerol 3-phosphate = 3-(imidazol-4-yl)-2-oxopropyl phosphate + H2O. It participates in amino-acid biosynthesis; L-histidine biosynthesis; L-histidine from 5-phospho-alpha-D-ribose 1-diphosphate: step 6/9. In Thioalkalivibrio sulfidiphilus (strain HL-EbGR7), this protein is Imidazoleglycerol-phosphate dehydratase.